A 593-amino-acid chain; its full sequence is Multidrug resistance-like ATP-binding protein MdlB (593 aa).

At methionine 1–leucine 25 the chain is on the cytoplasmic side. One can recognise an ABC transmembrane type-1 domain in the interval leucine 25–glutamine 310. The helical transmembrane segment at glycine 26–isoleucine 46 threads the bilayer. The Periplasmic portion of the chain corresponds to serine 47–lysine 62. Residues valine 63 to tyrosine 83 form a helical membrane-spanning segment. At alanine 84–valine 140 the chain is on the cytoplasmic side. Residues threonine 141–phenylalanine 161 traverse the membrane as a helical segment. Residues serine 162–aspartate 164 are Periplasmic-facing. The helical transmembrane segment at tryptophan 165–tyrosine 185 threads the bilayer. The Cytoplasmic segment spans residues glutamine 186–proline 254. A helical membrane pass occupies residues leucine 255 to alanine 275. At serine 276–threonine 278 the chain is on the periplasmic side. Residues isoleucine 279–isoleucine 299 traverse the membrane as a helical segment. The Cytoplasmic segment spans residues glutamate 300–alanine 593. An ABC transporter domain is found at isoleucine 341–leucine 574. Glycine 374 to serine 381 serves as a coordination point for ATP.

Belongs to the ABC transporter superfamily. Drug exporter-2 (TC 3.A.1.117) family.

The protein localises to the cell inner membrane. The enzyme catalyses ATP + H2O + xenobioticSide 1 = ADP + phosphate + xenobioticSide 2.. This chain is Multidrug resistance-like ATP-binding protein MdlB (mdlB), found in Escherichia coli O6:H1 (strain CFT073 / ATCC 700928 / UPEC).